The following is a 164-amino-acid chain: Phosphopantetheine adenylyltransferase (164 aa).

Ser10 provides a ligand contact to substrate. ATP-binding positions include 10 to 11 (SF) and His18. Substrate-binding residues include Lys42, Leu74, and Arg88. ATP-binding positions include 89-91 (GLR), Glu99, and 124-130 (YSFLSSS).

It belongs to the bacterial CoaD family. In terms of assembly, homohexamer. Mg(2+) serves as cofactor.

It localises to the cytoplasm. The catalysed reaction is (R)-4'-phosphopantetheine + ATP + H(+) = 3'-dephospho-CoA + diphosphate. It functions in the pathway cofactor biosynthesis; coenzyme A biosynthesis; CoA from (R)-pantothenate: step 4/5. Reversibly transfers an adenylyl group from ATP to 4'-phosphopantetheine, yielding dephospho-CoA (dPCoA) and pyrophosphate. The chain is Phosphopantetheine adenylyltransferase from Exiguobacterium sp. (strain ATCC BAA-1283 / AT1b).